Reading from the N-terminus, the 227-residue chain is Cytidylate kinase (227 aa).

Residue 12–20 (GPSGAGKGT) coordinates ATP.

Belongs to the cytidylate kinase family. Type 1 subfamily.

Its subcellular location is the cytoplasm. It catalyses the reaction CMP + ATP = CDP + ADP. It carries out the reaction dCMP + ATP = dCDP + ADP. This chain is Cytidylate kinase, found in Salmonella paratyphi B (strain ATCC BAA-1250 / SPB7).